The following is a 381-amino-acid chain: tRNA-specific 2-thiouridylase MnmA (381 aa).

ATP is bound by residues 14–21 and Met40; that span reads AMSGGVDS. Cys108 (nucleophile) is an active-site residue. Cysteines 108 and 205 form a disulfide. Residue Gly132 coordinates ATP. The interaction with tRNA stretch occupies residues 155–157; sequence KDQ. Catalysis depends on Cys205, which acts as the Cysteine persulfide intermediate. An interaction with tRNA region spans residues 309–310; that stretch reads RY.

It belongs to the MnmA/TRMU family.

It localises to the cytoplasm. The enzyme catalyses S-sulfanyl-L-cysteinyl-[protein] + uridine(34) in tRNA + AH2 + ATP = 2-thiouridine(34) in tRNA + L-cysteinyl-[protein] + A + AMP + diphosphate + H(+). In terms of biological role, catalyzes the 2-thiolation of uridine at the wobble position (U34) of tRNA, leading to the formation of s(2)U34. The sequence is that of tRNA-specific 2-thiouridylase MnmA from Deinococcus geothermalis (strain DSM 11300 / CIP 105573 / AG-3a).